A 287-amino-acid polypeptide reads, in one-letter code: Thymidylate synthase (287 aa).

A dUMP-binding site is contributed by R21. H51 contributes to the (6R)-5,10-methylene-5,6,7,8-tetrahydrofolate binding site. 150–151 (RR) serves as a coordination point for dUMP. The active-site Nucleophile is the C170. Residues 190–193 (RSGD), N201, and 231–233 (HIY) contribute to the dUMP site. D193 lines the (6R)-5,10-methylene-5,6,7,8-tetrahydrofolate pocket. A286 is a (6R)-5,10-methylene-5,6,7,8-tetrahydrofolate binding site.

Belongs to the thymidylate synthase family. Bacterial-type ThyA subfamily. Homodimer.

The protein localises to the cytoplasm. It carries out the reaction dUMP + (6R)-5,10-methylene-5,6,7,8-tetrahydrofolate = 7,8-dihydrofolate + dTMP. It participates in pyrimidine metabolism; dTTP biosynthesis. In terms of biological role, catalyzes the reductive methylation of 2'-deoxyuridine-5'-monophosphate (dUMP) to 2'-deoxythymidine-5'-monophosphate (dTMP) while utilizing 5,10-methylenetetrahydrofolate (mTHF) as the methyl donor and reductant in the reaction, yielding dihydrofolate (DHF) as a by-product. This enzymatic reaction provides an intracellular de novo source of dTMP, an essential precursor for DNA biosynthesis. The chain is Thymidylate synthase from Mycoplasma pneumoniae (strain ATCC 29342 / M129 / Subtype 1) (Mycoplasmoides pneumoniae).